We begin with the raw amino-acid sequence, 232 residues long: LOB domain-containing protein 11 (232 aa).

Residues 1 to 50 (MLKMEINGGVATPTASAVAKVTETTTPVNSPSPTSSPPPPPSPQQPPQPP) are disordered. The span at 34-50 (TSSPPPPPSPQQPPQPP) shows a compositional bias: pro residues. The LOB domain maps to 54 to 155 (SPCAACKILR…AQLAKTQVEL (102 aa)). Positions 181–218 (EQGQQKMSFESSFESGDEFISSPDEESNDLGFLEDNNN) are disordered. Residues 188 to 202 (SFESSFESGDEFISS) are compositionally biased toward low complexity.

The protein belongs to the LOB domain-containing protein family. Expressed in young shoots, stems, leaves and flowers.

The protein is LOB domain-containing protein 11 (LBD11) of Arabidopsis thaliana (Mouse-ear cress).